The primary structure comprises 321 residues: Glutaminase (321 aa).

Residues serine 69, asparagine 120, glutamate 165, asparagine 172, tyrosine 196, tyrosine 248, and valine 266 each coordinate substrate.

The protein belongs to the glutaminase family. As to quaternary structure, homotetramer.

The enzyme catalyses L-glutamine + H2O = L-glutamate + NH4(+). This is Glutaminase from Bacteroides fragilis (strain YCH46).